We begin with the raw amino-acid sequence, 100 residues long: CCAAT/enhancer-binding protein homolog 2 (100 aa).

2 disordered regions span residues 1–60 and 79–100; these read MSGN…ETLE and AYAK…SSAV. Residues 17–80 enclose the bZIP domain; the sequence is EDDYSTKRKR…SFLKEMFMAY (64 aa). The interval 23–48 is basic motif; that stretch reads KRKRNNEAVNRTRQKKRQEENDTAEK. A coiled-coil region spans residues 24 to 83; the sequence is RKRNNEAVNRTRQKKRQEENDTAEKVDELKKENETLERKVEQLQKELSFLKEMFMAYAKN. Basic and acidic residues predominate over residues 39–60; sequence RQEENDTAEKVDELKKENETLE. The interval 52–73 is leucine-zipper; it reads LKKENETLERKVEQLQKELSFL. Residues 88–100 are compositionally biased toward pro residues; it reads GPPPPPPPSSSAV.

It belongs to the bZIP family. C/EBP subfamily. Interacts with transcription factor zip-11. In terms of tissue distribution, expressed broadly in somatic tissues including the intestine.

The protein localises to the nucleus. Its function is as follows. Transcription factor that binds to the promoter and the enhancer regions of target genes. Regulates expression of genes involved in fat metabolism, including ech-1.1 and fat-5. Has a protective role in response to infection by the Gram-negative bacterium P.aeruginosa. Required for the activation of infection response gene irg-1 following P.aeruginosa infection. Required to prevent P.aeruginosa ToxA-mediated lethality. May also function in concert with transcription factor zip-11 to mediate immune responses, independently of the pmk-1/p38 MAPK pathway. May act together with the bZIP transcription factor, zip-2. The sequence is that of CCAAT/enhancer-binding protein homolog 2 from Caenorhabditis elegans.